The following is an 86-amino-acid chain: Small ribosomal subunit protein bS20 (86 aa).

The interval 1-25 (MANIKSQIKRNKQNEKRHERNKAVK) is disordered. Residues 12–22 (KQNEKRHERNK) show a composition bias toward basic and acidic residues.

It belongs to the bacterial ribosomal protein bS20 family.

In terms of biological role, binds directly to 16S ribosomal RNA. The protein is Small ribosomal subunit protein bS20 of Nocardioides sp. (strain ATCC BAA-499 / JS614).